The chain runs to 762 residues: Primary amine oxidase, lung isozyme (762 aa).

A signal peptide spans 1–16 (MFIFIFLSLWTLLVMG). Positions 23–54 (GSEEGVGKQCHPSLPPRCPSRSPSDQPWTHPD) are disordered. Residue Asn-136 is glycosylated (N-linked (GlcNAc...) asparagine). A disulfide bond links Cys-197 and Cys-198. Thr-211 carries an O-linked (GalNAc...) threonine glycan. Asn-231 and Asn-293 each carry an N-linked (GlcNAc...) asparagine glycan. Residue 383–393 (YMDACFGMGKF) participates in substrate binding. Residue Asp-385 is the Proton acceptor of the active site. A disulfide bridge links Cys-403 with Cys-429. Position 467–472 (467–472 (LLNYDY)) interacts with substrate. Catalysis depends on Tyr-470, which acts as the Schiff-base intermediate with substrate; via topaquinone. Tyr-470 is modified (2',4',5'-topaquinone). The Cu cation site is built by His-519 and His-521. Ca(2+) contacts are provided by Asp-528, Leu-529, Asp-530, and Glu-571. 577-584 (PLGGGSPR) lines the heparin pocket. N-linked (GlcNAc...) asparagine glycosylation is present at Asn-617. 2 residues coordinate Ca(2+): Phe-662 and Asn-664. A glycan (N-linked (GlcNAc...) asparagine) is linked at Asn-665. 3 residues coordinate Ca(2+): Glu-666, Asp-672, and Leu-673. Position 683 (His-683) interacts with Cu cation. Residues Cys-733 and Cys-740 are joined by a disulfide bond.

The protein belongs to the copper/topaquinone oxidase family. Homodimer; disulfide-linked. Cu cation serves as cofactor. Requires Ca(2+) as cofactor. It depends on L-topaquinone as a cofactor. Post-translationally, topaquinone (TPQ) is generated by copper-dependent autoxidation of a specific tyrosyl residue. In terms of tissue distribution, expressed in lung, spleen, heart and kidney.

The protein resides in the secreted. It is found in the extracellular space. It catalyses the reaction a primary methyl amine + O2 + H2O = an aldehyde + H2O2 + NH4(+). The sequence is that of Primary amine oxidase, lung isozyme from Bos taurus (Bovine).